The chain runs to 125 residues: Large ribosomal subunit protein mL51 (125 aa).

The N-terminal 29 residues, methionine 1–leucine 29, are a transit peptide targeting the mitochondrion.

Belongs to the mitochondrion-specific ribosomal protein mL51 family. As to quaternary structure, component of the mitochondrial ribosome large subunit (39S) which comprises a 16S rRNA and about 50 distinct proteins.

The protein resides in the mitochondrion. The protein is Large ribosomal subunit protein mL51 (mrpl51) of Xenopus tropicalis (Western clawed frog).